Consider the following 564-residue polypeptide: Dihydroxy-acid dehydratase (564 aa).

Residue C53 participates in [2Fe-2S] cluster binding. A Mg(2+)-binding site is contributed by D85. Residue C126 coordinates [2Fe-2S] cluster. Mg(2+)-binding residues include D127 and K128. K128 carries the N6-carboxylysine modification. C203 provides a ligand contact to [2Fe-2S] cluster. E454 is a binding site for Mg(2+). S480 (proton acceptor) is an active-site residue.

This sequence belongs to the IlvD/Edd family. Homodimer. [2Fe-2S] cluster is required as a cofactor. The cofactor is Mg(2+).

It carries out the reaction (2R)-2,3-dihydroxy-3-methylbutanoate = 3-methyl-2-oxobutanoate + H2O. The catalysed reaction is (2R,3R)-2,3-dihydroxy-3-methylpentanoate = (S)-3-methyl-2-oxopentanoate + H2O. It functions in the pathway amino-acid biosynthesis; L-isoleucine biosynthesis; L-isoleucine from 2-oxobutanoate: step 3/4. Its pathway is amino-acid biosynthesis; L-valine biosynthesis; L-valine from pyruvate: step 3/4. In terms of biological role, functions in the biosynthesis of branched-chain amino acids. Catalyzes the dehydration of (2R,3R)-2,3-dihydroxy-3-methylpentanoate (2,3-dihydroxy-3-methylvalerate) into 2-oxo-3-methylpentanoate (2-oxo-3-methylvalerate) and of (2R)-2,3-dihydroxy-3-methylbutanoate (2,3-dihydroxyisovalerate) into 2-oxo-3-methylbutanoate (2-oxoisovalerate), the penultimate precursor to L-isoleucine and L-valine, respectively. This Mycobacterium ulcerans (strain Agy99) protein is Dihydroxy-acid dehydratase.